We begin with the raw amino-acid sequence, 557 residues long: GMP synthase [glutamine-hydrolyzing] (557 aa).

The region spanning 13 to 209 (TILTLDFGSQ…AVDICGANPN (197 aa)) is the Glutamine amidotransferase type-1 domain. C89 serves as the catalytic Nucleophile. Catalysis depends on residues H183 and E185. In terms of domain architecture, GMPS ATP-PPase spans 210–414 (WTMSKFVDQE…LGIAHELVMR (205 aa)). 238 to 244 (SGGVDST) provides a ligand contact to ATP. XMP-binding residues include R311, D476, K549, and E555.

In terms of assembly, homodimer. Mg(2+) serves as cofactor.

Its subcellular location is the cytoplasm. The protein localises to the cytosol. It carries out the reaction XMP + L-glutamine + ATP + H2O = GMP + L-glutamate + AMP + diphosphate + 2 H(+). The protein operates within purine metabolism; GMP biosynthesis; GMP from XMP (L-Gln route): step 1/1. Inhibited by 6-diazo-5-oxo-l-norleucine (DON) and acivicin (ACI). Functionally, catalyzes the conversion of xanthine monophosphate (XMP) to GMP in the presence of glutamine and ATP through an adenyl-XMP intermediate. The chain is GMP synthase [glutamine-hydrolyzing] (gua1) from Aspergillus fumigatus (strain ATCC MYA-4609 / CBS 101355 / FGSC A1100 / Af293) (Neosartorya fumigata).